Here is a 299-residue protein sequence, read N- to C-terminus: Homoserine kinase (299 aa).

ATP is bound at residue 85–95 (PMSRGLGSSAT).

This sequence belongs to the GHMP kinase family. Homoserine kinase subfamily.

The protein localises to the cytoplasm. It carries out the reaction L-homoserine + ATP = O-phospho-L-homoserine + ADP + H(+). It functions in the pathway amino-acid biosynthesis; L-threonine biosynthesis; L-threonine from L-aspartate: step 4/5. In terms of biological role, catalyzes the ATP-dependent phosphorylation of L-homoserine to L-homoserine phosphate. In Clostridium novyi (strain NT), this protein is Homoserine kinase.